Here is a 319-residue protein sequence, read N- to C-terminus: Ninja-family protein Os07g0602900 (319 aa).

3 disordered regions span residues 1 to 26, 69 to 152, and 181 to 234; these read MAAS…EKGG, LPGG…DAMY, and AEAM…LTMR. Residues 70-79 are compositionally biased toward gly residues; it reads PGGGGGGAGG. Residues 105–118 show a composition bias toward basic and acidic residues; that stretch reads ERWRRREMQSLKRL. The segment covering 185–196 has biased composition (polar residues); sequence DTSSSDNASCQN. The span at 225–234 shows a compositional bias: low complexity; sequence LRTLRSLTMR.

It belongs to the Ninja family.

It is found in the nucleus. The chain is Ninja-family protein Os07g0602900 from Oryza sativa subsp. japonica (Rice).